We begin with the raw amino-acid sequence, 286 residues long: uncharacterized protein (286 aa).

This sequence belongs to the NmrA-type oxidoreductase family.

This is an uncharacterized protein from Bacillus subtilis (strain 168).